Consider the following 608-residue polypeptide: UvrABC system protein C (608 aa).

The GIY-YIG domain maps to 16–94 (NRPGVYRMFD…IKEWRPPYNI (79 aa)). Residues 204–239 (NALADELNVGMEQAAMRLDFEKAAELRDQVAILRRV) enclose the UVR domain.

The protein belongs to the UvrC family. As to quaternary structure, interacts with UvrB in an incision complex.

It localises to the cytoplasm. Functionally, the UvrABC repair system catalyzes the recognition and processing of DNA lesions. UvrC both incises the 5' and 3' sides of the lesion. The N-terminal half is responsible for the 3' incision and the C-terminal half is responsible for the 5' incision. The chain is UvrABC system protein C from Pseudomonas aeruginosa (strain ATCC 15692 / DSM 22644 / CIP 104116 / JCM 14847 / LMG 12228 / 1C / PRS 101 / PAO1).